Consider the following 21-residue polypeptide: Dahlein-5.2 (21 aa).

Expressed by the skin dorsal glands.

The protein localises to the secreted. In terms of biological role, has no antimicrobial activity. Strongly inhibits the formation of NO by neuronal nitric oxide synthase at micromolar concentrations. The protein is Dahlein-5.2 of Ranoidea dahlii (Dahl's aquatic frog).